Consider the following 885-residue polypeptide: High affinity cAMP-specific and IBMX-insensitive 3',5'-cyclic phosphodiesterase 8B (885 aa).

2 disordered regions span residues 18–41 (RDSD…APLP) and 72–95 (TELG…GRRR). A compositionally biased stretch (polar residues) spans 23–34 (SSSPRQTTSVSQ). A compositionally biased stretch (low complexity) spans 75 to 90 (GSGSSAGSAAPAATTS). One can recognise a PAS domain in the interval 267–338 (ACNSVFTALD…DTINTCIKKG (72 aa)). Residues 393–436 (IHRDSGDNSQTEPHSFRYKNRRKESIDVKSISSRGSDAPSLQNR) are disordered. Over residues 422–436 (SISSRGSDAPSLQNR) the composition is skewed to polar residues. At Ser517 the chain carries Phosphoserine. A PDEase domain is found at 539 to 875 (TINDVPPCIS…KHWKTLDDLK (337 aa)). The Proton donor role is filled by His615. 3 residues coordinate a divalent metal cation: His619, His655, and Asp656. Ser754 is subject to Phosphoserine. An a divalent metal cation-binding site is contributed by Asp781.

The protein belongs to the cyclic nucleotide phosphodiesterase family. PDE8 subfamily. The cofactor is a divalent metal cation. Abundantly expressed in the thyroid. Also very weakly expressed in brain, spinal cord and placenta. In the thyroid isoform 1 predominates, and isoforms 2 and 6 are also highly expressed. In the placenta isoforms 1 and 2 are expressed equally. In the brain isoform 2 predominates.

It catalyses the reaction 3',5'-cyclic AMP + H2O = AMP + H(+). Its pathway is purine metabolism; 3',5'-cyclic AMP degradation; AMP from 3',5'-cyclic AMP: step 1/1. Its activity is regulated as follows. Inhibited by dipyridimole. Insensitive to selective PDE inhibitors including rolipram and milrinone as well as to the non-selective inhibitor, IBMX. Unaffected by cGMP. Hydrolyzes the second messenger cAMP, which is a key regulator of many important physiological processes. May be involved in specific signaling in the thyroid gland. The protein is High affinity cAMP-specific and IBMX-insensitive 3',5'-cyclic phosphodiesterase 8B (PDE8B) of Homo sapiens (Human).